The chain runs to 183 residues: Large ribosomal subunit protein eL18 (183 aa).

A disordered region spans residues 151–183 (HFGPAPGAPRSHTKPYVRSKGHEQAKPSRRSNV).

It belongs to the eukaryotic ribosomal protein eL18 family.

The protein localises to the cytoplasm. In Plutella xylostella (Diamondback moth), this protein is Large ribosomal subunit protein eL18 (RpL18).